The primary structure comprises 48 residues: Large ribosomal subunit protein bL33A (48 aa).

Belongs to the bacterial ribosomal protein bL33 family.

The polypeptide is Large ribosomal subunit protein bL33A (Metamycoplasma arthritidis (strain 158L3-1) (Mycoplasma arthritidis)).